A 529-amino-acid chain; its full sequence is Peptide chain release factor 3 (529 aa).

One can recognise a tr-type G domain in the interval 11 to 280 (NKRRTFAIIS…GLTEWAPKPQ (270 aa)). GTP is bound by residues 20-27 (SHPDAGKT), 88-92 (DTPGH), and 142-145 (NKLD).

This sequence belongs to the TRAFAC class translation factor GTPase superfamily. Classic translation factor GTPase family. PrfC subfamily.

It localises to the cytoplasm. In terms of biological role, increases the formation of ribosomal termination complexes and stimulates activities of RF-1 and RF-2. It binds guanine nucleotides and has strong preference for UGA stop codons. It may interact directly with the ribosome. The stimulation of RF-1 and RF-2 is significantly reduced by GTP and GDP, but not by GMP. In Mannheimia succiniciproducens (strain KCTC 0769BP / MBEL55E), this protein is Peptide chain release factor 3.